We begin with the raw amino-acid sequence, 304 residues long: Killer cell immunoglobulin-like receptor 2DS4 (304 aa).

Positions 1-21 (MSLMVIIMACVGFFLLQGAWP) are cleaved as a signal peptide. Topologically, residues 22–245 (QEGVHRKPSF…SKTGNPRHLH (224 aa)) are extracellular. 2 Ig-like C2-type domains span residues 42–107 (EETV…VPHS) and 142–205 (GENV…FRDA). C49 and C100 are oxidised to a cystine. N67, N84, N144, N178, and N211 each carry an N-linked (GlcNAc...) asparagine glycan. A disulfide bond links C149 and C198. A disordered region spans residues 220–239 (VTGNPSNSWPSPTEPSSKTG). The helical transmembrane segment at 246–265 (VLIGTSVVKIPFTILLFFLL) threads the bilayer. Residues 266–304 (HRWCSDKKNAAVMDQEPAGNRTVNSEDSDEQDHQEVSYA) are Cytoplasmic-facing. Residues 280–304 (QEPAGNRTVNSEDSDEQDHQEVSYA) are disordered.

The protein belongs to the immunoglobulin superfamily. Interacts with HLA-F; this interaction is direct.

The protein localises to the cell membrane. Its function is as follows. Receptor on natural killer (NK) cells for HLA-C alleles. Does not inhibit the activity of NK cells. The protein is Killer cell immunoglobulin-like receptor 2DS4 of Homo sapiens (Human).